The chain runs to 398 residues: ATP-dependent RNA helicase eIF4A (398 aa).

The Q motif signature appears at 25–53 (DSFDSMELKPELLRGIYAYGFERPSAIQQ). In terms of domain architecture, Helicase ATP-binding spans 56–226 (ILPIIKGNDV…TKFMRDPVRI (171 aa)). 69 to 76 (AQSGTGKT) is an ATP binding site. The DEAD box motif lies at 174–177 (DEAD). One can recognise a Helicase C-terminal domain in the interval 237–398 (GIKQFYIAVE…EMPMNVADLI (162 aa)).

Belongs to the DEAD box helicase family. eIF4A subfamily. Component of the eIF4F complex, which composition varies with external and internal environmental conditions. It is composed of at least eIF4A, eIF4E and eIF4G.

The protein resides in the cytoplasm. The catalysed reaction is ATP + H2O = ADP + phosphate + H(+). Functionally, ATP-dependent RNA helicase which is a subunit of the eIF4F complex involved in cap recognition and is required for mRNA binding to ribosome. In the current model of translation initiation, eIF4A unwinds RNA secondary structures in the 5'-UTR of mRNAs which is necessary to allow efficient binding of the small ribosomal subunit, and subsequent scanning for the initiator codon. The sequence is that of ATP-dependent RNA helicase eIF4A (tif1) from Neosartorya fischeri (strain ATCC 1020 / DSM 3700 / CBS 544.65 / FGSC A1164 / JCM 1740 / NRRL 181 / WB 181) (Aspergillus fischerianus).